The chain runs to 274 residues: Protein RecA (274 aa).

43–50 (GPESSGKT) is an ATP binding site.

This sequence belongs to the RecA family.

It is found in the cytoplasm. In terms of biological role, can catalyze the hydrolysis of ATP in the presence of single-stranded DNA, the ATP-dependent uptake of single-stranded DNA by duplex DNA, and the ATP-dependent hybridization of homologous single-stranded DNAs. It interacts with LexA causing its activation and leading to its autocatalytic cleavage. The chain is Protein RecA from Neisseria polysaccharea.